A 272-amino-acid chain; its full sequence is Shikimate dehydrogenase (NADP(+)) (272 aa).

Shikimate contacts are provided by residues 14 to 16 (SKS) and threonine 61. Lysine 65 functions as the Proton acceptor in the catalytic mechanism. Glutamate 77 serves as a coordination point for NADP(+). Residues asparagine 86 and aspartate 102 each coordinate shikimate. NADP(+) contacts are provided by residues 126 to 130 (GAGGA), 149 to 154 (NRTASR), and methionine 213. Residue tyrosine 215 coordinates shikimate. Glycine 237 is an NADP(+) binding site.

The protein belongs to the shikimate dehydrogenase family. In terms of assembly, homodimer.

It catalyses the reaction shikimate + NADP(+) = 3-dehydroshikimate + NADPH + H(+). It participates in metabolic intermediate biosynthesis; chorismate biosynthesis; chorismate from D-erythrose 4-phosphate and phosphoenolpyruvate: step 4/7. Involved in the biosynthesis of the chorismate, which leads to the biosynthesis of aromatic amino acids. Catalyzes the reversible NADPH linked reduction of 3-dehydroshikimate (DHSA) to yield shikimate (SA). The protein is Shikimate dehydrogenase (NADP(+)) of Salmonella choleraesuis (strain SC-B67).